Here is a 316-residue protein sequence, read N- to C-terminus: Protein YIPF2 (316 aa).

The residue at position 2 (Ala-2) is an N-acetylalanine. Over 2-124 (ASADELTFHE…LRNRPDLYGP (123 aa)) the chain is Cytoplasmic. Residues 16–37 (TNLLADTPDAATTSRSDQLTPQ) form a disordered region. Residues 25-36 (AATTSRSDQLTP) show a composition bias toward polar residues. The helical transmembrane segment at 125-145 (FWICATLAFVLAVTGNLTLVL) threads the bilayer. Residues 146–163 (AQRRDPSIHYSPQFHKVT) are Lumenal-facing. The helical transmembrane segment at 164 to 184 (VAGISIYCYAWLVPLALWGFL) threads the bilayer. At 185 to 196 (RWRKGVQERMGP) the chain is on the cytoplasmic side. The chain crosses the membrane as a helical span at residues 197 to 219 (YTFLETVCIYGYSLFVFIPMVVL). At 220 to 231 (WLIPVPWLQWLF) the chain is on the lumenal side. The chain crosses the membrane as a helical span at residues 232–252 (GALALGLSAAGLVFTLWPVVR). The Cytoplasmic segment spans residues 253–256 (EDTR). The helical transmembrane segment at 257 to 277 (LVATVLLSVVVLLHALLAMGC) threads the bilayer. Residues 278–316 (KLYFFQSLPPENVAPPPQITSLPSNIALSPTLPQSLAPS) lie on the Lumenal side of the membrane.

It belongs to the YIP1 family. As to quaternary structure, interacts with YIPF6; this interaction may stabilize YIPF2. May also form a ternary complex with YIPF1 and YIPF6.

The protein resides in the golgi apparatus. It localises to the cis-Golgi network membrane. Its subcellular location is the trans-Golgi network membrane. It is found in the late endosome membrane. In Homo sapiens (Human), this protein is Protein YIPF2 (YIPF2).